Reading from the N-terminus, the 250-residue chain is N-acetylmuramoyl-L-alanine amidase CwlH (250 aa).

The signal sequence occupies residues 1–44 (MVTIKKDFIPVSNDNRPGYAMAPAYITVHNTANTAKGADAKMHA). The 97-residue stretch at 45–141 (KFVKNPNTSE…KKWSGKECPR (97 aa)) folds into the N-acetylmuramoyl-L-alanine amidase domain.

This sequence belongs to the N-acetylmuramoyl-L-alanine amidase 2 family.

It is found in the secreted. The enzyme catalyses Hydrolyzes the link between N-acetylmuramoyl residues and L-amino acid residues in certain cell-wall glycopeptides.. Its function is as follows. Autolysins are involved in some important biological processes such as cell separation, cell-wall turnover, competence for genetic transformation, formation of the flagella and sporulation. Could play a role in mother cell lysis with CwlC. The polypeptide is N-acetylmuramoyl-L-alanine amidase CwlH (cwlH) (Bacillus subtilis (strain 168)).